Reading from the N-terminus, the 438-residue chain is uncharacterized protein (438 aa).

A Zn(2+)-binding site is contributed by His-59. Glu-62 (proton acceptor) is an active-site residue. The Zn(2+) site is built by His-63 and Glu-139.

Belongs to the peptidase M16 family. The cofactor is Zn(2+).

This is an uncharacterized protein from Mycobacterium bovis (strain ATCC BAA-935 / AF2122/97).